The chain runs to 541 residues: Putative apolipoprotein N-acyltransferase (541 aa).

Transmembrane regions (helical) follow at residues 31-51 (PLPA…AAHA), 65-85 (GWLF…VSMH), 89-109 (GLAA…LALF), 144-164 (AACW…FPWL), 181-201 (LLGV…LAGL), and 215-235 (LAAG…QFSW). The CN hydrolase domain maps to 248-511 (VQGNVEQSQK…AGVLPVAVQG (264 aa)). Glu-292 acts as the Proton acceptor in catalysis. Residue Lys-366 is part of the active site. The Nucleophile role is filled by Cys-416.

The protein belongs to the CN hydrolase family. Apolipoprotein N-acyltransferase subfamily.

Its subcellular location is the cell inner membrane. The catalysed reaction is N-terminal S-1,2-diacyl-sn-glyceryl-L-cysteinyl-[lipoprotein] + a glycerophospholipid = N-acyl-S-1,2-diacyl-sn-glyceryl-L-cysteinyl-[lipoprotein] + a 2-acyl-sn-glycero-3-phospholipid + H(+). Its pathway is protein modification; lipoprotein biosynthesis (N-acyl transfer). Functionally, catalyzes the phospholipid dependent N-acylation of the N-terminal cysteine of apolipoprotein, the last step in lipoprotein maturation. The polypeptide is Putative apolipoprotein N-acyltransferase (Bordetella parapertussis (strain 12822 / ATCC BAA-587 / NCTC 13253)).